The sequence spans 99 residues: NADH-quinone oxidoreductase subunit K (99 aa).

The next 3 membrane-spanning stretches (helical) occupy residues 3–23 (PDNY…GVLL), 28–48 (IVMF…FVTF), and 59–79 (VVAF…LAII).

Belongs to the complex I subunit 4L family. NDH-1 is composed of 14 different subunits. Subunits NuoA, H, J, K, L, M, N constitute the membrane sector of the complex.

The protein localises to the cell membrane. The catalysed reaction is a quinone + NADH + 5 H(+)(in) = a quinol + NAD(+) + 4 H(+)(out). In terms of biological role, NDH-1 shuttles electrons from NADH, via FMN and iron-sulfur (Fe-S) centers, to quinones in the respiratory chain. The immediate electron acceptor for the enzyme in this species is believed to be a menaquinone. Couples the redox reaction to proton translocation (for every two electrons transferred, four hydrogen ions are translocated across the cytoplasmic membrane), and thus conserves the redox energy in a proton gradient. The polypeptide is NADH-quinone oxidoreductase subunit K (Mycolicibacterium vanbaalenii (strain DSM 7251 / JCM 13017 / BCRC 16820 / KCTC 9966 / NRRL B-24157 / PYR-1) (Mycobacterium vanbaalenii)).